The chain runs to 291 residues: 4-hydroxy-tetrahydrodipicolinate synthase (291 aa).

Thr-44 serves as a coordination point for pyruvate. Catalysis depends on Tyr-132, which acts as the Proton donor/acceptor. Residue Lys-161 is the Schiff-base intermediate with substrate of the active site. Ile-202 contacts pyruvate.

The protein belongs to the DapA family. Homotetramer; dimer of dimers.

Its subcellular location is the cytoplasm. It catalyses the reaction L-aspartate 4-semialdehyde + pyruvate = (2S,4S)-4-hydroxy-2,3,4,5-tetrahydrodipicolinate + H2O + H(+). Its pathway is amino-acid biosynthesis; L-lysine biosynthesis via DAP pathway; (S)-tetrahydrodipicolinate from L-aspartate: step 3/4. Functionally, catalyzes the condensation of (S)-aspartate-beta-semialdehyde [(S)-ASA] and pyruvate to 4-hydroxy-tetrahydrodipicolinate (HTPA). The protein is 4-hydroxy-tetrahydrodipicolinate synthase of Endomicrobium trichonymphae.